The sequence spans 150 residues: Mediator of RNA polymerase II transcription subunit 22a (150 aa).

Residues 99–127 (SLNDHVEQRIAEFDQEAEKTNRLLARIAD) adopt a coiled-coil conformation.

It belongs to the Mediator complex subunit 22 family. In terms of assembly, component of the Mediator complex.

It localises to the nucleus. Functionally, component of the Mediator complex, a coactivator involved in the regulated transcription of nearly all RNA polymerase II-dependent genes. Mediator functions as a bridge to convey information from gene-specific regulatory proteins to the basal RNA polymerase II transcription machinery. The Mediator complex, having a compact conformation in its free form, is recruited to promoters by direct interactions with regulatory proteins and serves for the assembly of a functional preinitiation complex with RNA polymerase II and the general transcription factors. This is Mediator of RNA polymerase II transcription subunit 22a (MED22A) from Arabidopsis thaliana (Mouse-ear cress).